A 206-amino-acid chain; its full sequence is Small ribosomal subunit protein uS4 (206 aa).

The 62-residue stretch at 96–157 (QRLDNVVYRM…KAKKQARIGA (62 aa)) folds into the S4 RNA-binding domain.

Belongs to the universal ribosomal protein uS4 family. Part of the 30S ribosomal subunit. Contacts protein S5. The interaction surface between S4 and S5 is involved in control of translational fidelity.

Its function is as follows. One of the primary rRNA binding proteins, it binds directly to 16S rRNA where it nucleates assembly of the body of the 30S subunit. With S5 and S12 plays an important role in translational accuracy. This Idiomarina loihiensis (strain ATCC BAA-735 / DSM 15497 / L2-TR) protein is Small ribosomal subunit protein uS4.